The following is a 285-amino-acid chain: Malectin (285 aa).

An N-terminal signal peptide occupies residues 1–26 (MRRVTLHCAARLVIAALWLLVEVCRA). Residues 27–262 (ESGAQSLAER…TPNPYATDNS (236 aa)) lie on the Lumenal side of the membrane. Positions 71, 93, 120, 121, and 190 each coordinate a carbohydrate. The disordered stretch occupies residues 209-258 (KLQPHPGLEKREEEEEEEEEGEGPEGEKKSASTSPKNPVRSGPRTPNPYA). Residues 220–232 (EEEEEEEEEGEGP) are compositionally biased toward acidic residues. A glycan (N-linked (GlcNAc...) asparagine) is linked at N261. The helical transmembrane segment at 263-283 (SLMFPILVAFGVFIPTLFCLC) threads the bilayer. The Cytoplasmic portion of the chain corresponds to 284 to 285 (RL).

The protein belongs to the malectin family.

The protein resides in the endoplasmic reticulum membrane. Carbohydrate-binding protein with a strong ligand preference for Glc2-N-glycan. May play a role in the early steps of protein N-glycosylation. This is Malectin from Danio rerio (Zebrafish).